The chain runs to 350 residues: Ion-translocating oxidoreductase complex subunit D (350 aa).

Transmembrane regions (helical) follow at residues 25–45 (ILCA…GTVI), 89–109 (IPPL…IVIV), and 129–149 (VMLL…SVIA). The residue at position 185 (Thr-185) is an FMN phosphoryl threonine. 5 consecutive transmembrane segments (helical) span residues 212–232 (GFGV…LVML), 239–259 (WHIT…GYLL), 264–284 (FTGP…FFIA), 298–318 (LVFG…GGYP), and 319–339 (DAFA…DHYM).

It belongs to the NqrB/RnfD family. As to quaternary structure, the complex is composed of six subunits: RnfA, RnfB, RnfC, RnfD, RnfE and RnfG. Requires FMN as cofactor.

It localises to the cell inner membrane. Functionally, part of a membrane-bound complex that couples electron transfer with translocation of ions across the membrane. This is Ion-translocating oxidoreductase complex subunit D from Shewanella sediminis (strain HAW-EB3).